A 785-amino-acid polypeptide reads, in one-letter code: Mitochondrial intermediate peptidase (785 aa).

A mitochondrion-targeting transit peptide spans 1-43; sequence MLTRPAQNALLKSMQPLFRFRGCLLAKSTSTPRRDISTSSRKL. His-567 is a Zn(2+) binding site. Residue Glu-568 is part of the active site. Positions 571 and 574 each coordinate Zn(2+).

The protein belongs to the peptidase M3 family. Zn(2+) is required as a cofactor.

The protein localises to the mitochondrion matrix. The catalysed reaction is Release of an N-terminal octapeptide as second stage of processing of some proteins imported into the mitochondrion.. Its function is as follows. Cleaves proteins, imported into the mitochondrion, to their mature size. While most mitochondrial precursor proteins are processed to the mature form in one step by mitochondrial processing peptidase (MPP), the sequential cleavage by MIP of an octapeptide after initial processing by MPP is a required step for a subgroup of nuclear-encoded precursor proteins destined for the matrix or the inner membrane. The protein is Mitochondrial intermediate peptidase (OCT1) of Pleurotus djamor (Pink oyster mushroom).